A 327-amino-acid polypeptide reads, in one-letter code: Aspartate--ammonia ligase (327 aa).

Belongs to the class-II aminoacyl-tRNA synthetase family. AsnA subfamily.

The protein localises to the cytoplasm. It catalyses the reaction L-aspartate + NH4(+) + ATP = L-asparagine + AMP + diphosphate + H(+). The protein operates within amino-acid biosynthesis; L-asparagine biosynthesis; L-asparagine from L-aspartate (ammonia route): step 1/1. The polypeptide is Aspartate--ammonia ligase (Fusobacterium nucleatum subsp. nucleatum (strain ATCC 25586 / DSM 15643 / BCRC 10681 / CIP 101130 / JCM 8532 / KCTC 2640 / LMG 13131 / VPI 4355)).